Reading from the N-terminus, the 172-residue chain is Adenine phosphoribosyltransferase (172 aa).

The protein belongs to the purine/pyrimidine phosphoribosyltransferase family. Homodimer.

The protein localises to the cytoplasm. It carries out the reaction AMP + diphosphate = 5-phospho-alpha-D-ribose 1-diphosphate + adenine. It participates in purine metabolism; AMP biosynthesis via salvage pathway; AMP from adenine: step 1/1. Functionally, catalyzes a salvage reaction resulting in the formation of AMP, that is energically less costly than de novo synthesis. The protein is Adenine phosphoribosyltransferase of Picosynechococcus sp. (strain ATCC 27264 / PCC 7002 / PR-6) (Agmenellum quadruplicatum).